Consider the following 146-residue polypeptide: Large ribosomal subunit protein uL15 (146 aa).

Residues 1–13 show a composition bias toward basic and acidic residues; sequence MKLHELRPAEGSR. Residues 1-55 are disordered; sequence MKLHELRPAEGSRKSPKRVGRGTGSGLGKTSARGENGQNSRSGGGVRPGFEGGQM. The span at 42–52 shows a compositional bias: gly residues; it reads SGGGVRPGFEG.

This sequence belongs to the universal ribosomal protein uL15 family. In terms of assembly, part of the 50S ribosomal subunit.

Its function is as follows. Binds to the 23S rRNA. The chain is Large ribosomal subunit protein uL15 from Clostridium tetani (strain Massachusetts / E88).